Reading from the N-terminus, the 405-residue chain is Peroxisome biogenesis factor 3 (405 aa).

Over methionine 1–serine 26 the chain is Cytoplasmic. Residues phenylalanine 27–histidine 49 form a helical membrane-spanning segment. Topologically, residues asparagine 50–lysine 124 are peroxisomal. A helical transmembrane segment spans residues valine 125–phenylalanine 144. Over asparagine 145–phenylalanine 405 the chain is Cytoplasmic.

Belongs to the peroxin-3 family.

The protein resides in the peroxisome membrane. Functionally, involved in peroxisome biosynthesis. The protein is Peroxisome biogenesis factor 3 (pex3) of Dictyostelium discoideum (Social amoeba).